The sequence spans 594 residues: DEAD-box ATP-dependent RNA helicase 25 (594 aa).

Disordered stretches follow at residues 56 to 80 (RSGG…EEGL) and 92 to 121 (GVRE…VDGS). A Q motif motif is present at residues 126 to 154 (TRFDQCTISPLSLKAVKDAGYERMTQVQE). The region spanning 157–340 (LPVILQGKDV…HIAMKKNYKF (184 aa)) is the Helicase ATP-binding domain. Position 170–177 (170–177 (AKTGTGKT)) interacts with ATP. The DEAD box motif lies at 288–291 (DEAD). The 151-residue stretch at 370–520 (ILYDVLKKHV…SVDSSTQTIV (151 aa)) folds into the Helicase C-terminal domain.

This sequence belongs to the DEAD box helicase family.

It carries out the reaction ATP + H2O = ADP + phosphate + H(+). This Oryza sativa subsp. japonica (Rice) protein is DEAD-box ATP-dependent RNA helicase 25.